The primary structure comprises 755 residues: Polyribonucleotide nucleotidyltransferase (755 aa).

Mg(2+)-binding residues include D493 and D499. In terms of domain architecture, KH spans 560-619 (PRIMTIQIPVDKIGALIGPGGKTIRNICETTGAQIDIEDDGRVFITTPDGAAARQAISMI). The region spanning 629-698 (GDIFLGKVVS…TTGKISLSRR (70 aa)) is the S1 motif domain. A disordered region spans residues 699-755 (AVLTGETPEERKAAGAAPRPRPREEQRGGRDEPRSLRDELRGPRREGDRPRPRRRDD). Over residues 719 to 755 (RPREEQRGGRDEPRSLRDELRGPRREGDRPRPRRRDD) the composition is skewed to basic and acidic residues.

It belongs to the polyribonucleotide nucleotidyltransferase family. Mg(2+) serves as cofactor.

The protein resides in the cytoplasm. The enzyme catalyses RNA(n+1) + phosphate = RNA(n) + a ribonucleoside 5'-diphosphate. In terms of biological role, involved in mRNA degradation. Catalyzes the phosphorolysis of single-stranded polyribonucleotides processively in the 3'- to 5'-direction. The chain is Polyribonucleotide nucleotidyltransferase from Chloroflexus aurantiacus (strain ATCC 29366 / DSM 635 / J-10-fl).